The primary structure comprises 465 residues: Iron transporter FTH1 (465 aa).

At 1–11 (MAFEDYFSFQI) the chain is on the vacuolar side. The helical transmembrane segment at 12–32 (FFIFLRESLEIVVIVSILLTI) threads the bilayer. Residues 33–135 (VKQGLSVEDD…LYQKLKIQIL (103 aa)) lie on the Cytoplasmic side of the membrane. The disordered stretch occupies residues 44–66 (PFEGSSSSAGLPSPNTNTNADST). Polar residues predominate over residues 46–66 (EGSSSSAGLPSPNTNTNADST). A helical membrane pass occupies residues 136-156 (AGGAFGLLLCMLIGGAFVSIF). Topologically, residues 157–170 (YHIGTDLWTLSEHY) are vacuolar. Residues 171 to 191 (YEGVLSLVASVIISVMGLFFL) form a helical membrane-spanning segment. The Cytoplasmic portion of the chain corresponds to 192–289 (RMGKLREKFR…FFFRYSSSLS (98 aa)). Residues 290 to 310 (LKICLVVATCFLYLIAAGLFS) traverse the membrane as a helical segment. Topologically, residues 311–358 (KGVWQLELQDYVNKCNGQDMSEVGNGPGSYDISRSVWHVNCCNGEKDG) are vacuolar. The chain crosses the membrane as a helical span at residues 359–379 (GWMIFTAIFGWTNSATVGSVI). The Cytoplasmic portion of the chain corresponds to 380–465 (SYNAYWLVLI…LIIDSSGSAN (86 aa)). Residues 433–465 (TSELNSSTSEPDSQRRSKDSSVPLIIDSSGSAN) are disordered. Phosphoserine occurs at positions 449 and 453.

The protein belongs to the oxidase-dependent Fe transporter (OFeT) (TC 9.A.10.1) family. In terms of assembly, interacts with FET5.

The protein resides in the vacuole membrane. In terms of biological role, high affinity iron transporter probably involved in transport of intravacuolar stores of iron. In Saccharomyces cerevisiae (strain ATCC 204508 / S288c) (Baker's yeast), this protein is Iron transporter FTH1 (FTH1).